The following is a 162-amino-acid chain: Nucleotide-binding protein CHU_2278 (162 aa).

It belongs to the YajQ family.

In terms of biological role, nucleotide-binding protein. The protein is Nucleotide-binding protein CHU_2278 of Cytophaga hutchinsonii (strain ATCC 33406 / DSM 1761 / CIP 103989 / NBRC 15051 / NCIMB 9469 / D465).